A 186-amino-acid polypeptide reads, in one-letter code: Peptidyl-tRNA hydrolase (186 aa).

Residue Tyr14 coordinates tRNA. His19 (proton acceptor) is an active-site residue. Positions 64, 66, and 112 each coordinate tRNA.

It belongs to the PTH family. In terms of assembly, monomer.

The protein resides in the cytoplasm. The enzyme catalyses an N-acyl-L-alpha-aminoacyl-tRNA + H2O = an N-acyl-L-amino acid + a tRNA + H(+). Hydrolyzes ribosome-free peptidyl-tRNAs (with 1 or more amino acids incorporated), which drop off the ribosome during protein synthesis, or as a result of ribosome stalling. In terms of biological role, catalyzes the release of premature peptidyl moieties from peptidyl-tRNA molecules trapped in stalled 50S ribosomal subunits, and thus maintains levels of free tRNAs and 50S ribosomes. The sequence is that of Peptidyl-tRNA hydrolase from Geobacillus kaustophilus (strain HTA426).